Consider the following 331-residue polypeptide: uncharacterized protein (331 aa).

The protein to bacterial alkanal monooxygenase alpha and beta chains.

This is an uncharacterized protein from Bacillus subtilis (strain 168).